A 568-amino-acid polypeptide reads, in one-letter code: CDK5 and ABL1 enzyme substrate 1 (568 aa).

Residues 1–31 (MAAATATAGTAACSSSSSSRGGSTDAAATSG) show a composition bias toward low complexity. 2 disordered regions span residues 1–94 (MAAA…PGAR) and 130–169 (PSLV…QEEL). Positions 1-98 (MAAATATAGT…TKPGARARLS (98 aa)) are interaction with TDRD7. Over residues 33 to 45 (QPPPPPPATAPPE) the composition is skewed to pro residues. Basic and acidic residues predominate over residues 46–56 (PLRKPRMDPRR). An interaction with CDK3 region spans residues 140-427 (PSQPPRSAPA…TTVIDYVKPS (288 aa)). S248 carries the post-translational modification Phosphoserine. Position 274 is a phosphoserine; by CDK2 and CDK3 (S274). A Phosphothreonine modification is found at T350.

Belongs to the cyclin family. As to quaternary structure, found in a complex with p53/TP53. Found in a number of complexes with CDK2, CDK3, CDK5, ABL1, TDRD7, CDK17, CCNA1, CCNE1 and TP73. Interacts with CDK2, CDK3, CDK5, ABL1 and TDRD7. In terms of processing, phosphorylated on Ser-274 by CCNE1/CDK3. Phosphorylated on serine/threonine residues by CDK5 and on tyrosine residues by ABL1. Also phosphorylated in vitro by CCNA1/CDK2, CCNE1/CDK2, CCNA1/CDK3 and CCNE1/CDK3. As to expression, ubiquitous. Expressed in postnatal day 1 (P1), in postmitotic neurons of the subplate, cortex (V/VI) and marginal zone; in postnatal day 7 (P7), in all layers of the cerebral cortex and in the CA1 and CA2 regions of the hippocampus (at protein level). Highly expressed in brain, kidney, liver and lung.

It localises to the nucleus. It is found in the cytoplasm. The protein localises to the cell projection. The protein resides in the growth cone. In terms of biological role, cyclin-dependent kinase binding protein. Enhances cyclin-dependent kinase tyrosine phosphorylation by nonreceptor tyrosine kinases, such as that of CDK5 by activated ABL1, which leads to increased CDK5 activity and is critical for neuronal development, and that of CDK2 by WEE1, which leads to decreased CDK2 activity and growth inhibition. Positively affects neuronal outgrowth. Plays a role as a regulator for p53/p73-induced cell death. The sequence is that of CDK5 and ABL1 enzyme substrate 1 (Cables1) from Mus musculus (Mouse).